Here is a 154-residue protein sequence, read N- to C-terminus: SsrA-binding protein (154 aa).

Belongs to the SmpB family.

It localises to the cytoplasm. In terms of biological role, required for rescue of stalled ribosomes mediated by trans-translation. Binds to transfer-messenger RNA (tmRNA), required for stable association of tmRNA with ribosomes. tmRNA and SmpB together mimic tRNA shape, replacing the anticodon stem-loop with SmpB. tmRNA is encoded by the ssrA gene; the 2 termini fold to resemble tRNA(Ala) and it encodes a 'tag peptide', a short internal open reading frame. During trans-translation Ala-aminoacylated tmRNA acts like a tRNA, entering the A-site of stalled ribosomes, displacing the stalled mRNA. The ribosome then switches to translate the ORF on the tmRNA; the nascent peptide is terminated with the 'tag peptide' encoded by the tmRNA and targeted for degradation. The ribosome is freed to recommence translation, which seems to be the essential function of trans-translation. This chain is SsrA-binding protein, found in Methylobacillus flagellatus (strain ATCC 51484 / DSM 6875 / VKM B-1610 / KT).